Consider the following 85-residue polypeptide: Protein RnfH (85 aa).

This sequence belongs to the UPF0125 (RnfH) family.

The protein is Protein RnfH of Cereibacter sphaeroides (strain ATCC 17023 / DSM 158 / JCM 6121 / CCUG 31486 / LMG 2827 / NBRC 12203 / NCIMB 8253 / ATH 2.4.1.) (Rhodobacter sphaeroides).